A 118-amino-acid polypeptide reads, in one-letter code: Ferredoxin-thioredoxin reductase, catalytic chain (118 aa).

A [4Fe-4S] cluster-binding site is contributed by cysteine 57. The active-site Nucleophile is cysteine 59. Cysteines 59 and 89 form a disulfide. 3 residues coordinate [4Fe-4S] cluster: cysteine 76, cysteine 78, and cysteine 87.

The protein belongs to the ferredoxin thioredoxin reductase beta subunit family. As to quaternary structure, heterodimer of subunit A (variable subunit) and subunit B (catalytic subunit). Heterodimeric FTR forms a complex with ferredoxin and thioredoxin. Requires [4Fe-4S] cluster as cofactor.

Its subcellular location is the plastid. The protein resides in the chloroplast. The catalysed reaction is [thioredoxin]-disulfide + 2 reduced [2Fe-2S]-[ferredoxin] + 2 H(+) = [thioredoxin]-dithiol + 2 oxidized [2Fe-2S]-[ferredoxin]. Its function is as follows. Catalytic subunit of the ferredoxin-thioredoxin reductase (FTR), which catalyzes the two-electron reduction of thioredoxins by the electrons provided by reduced ferredoxin. In Porphyra purpurea (Red seaweed), this protein is Ferredoxin-thioredoxin reductase, catalytic chain (ftrB).